The following is a 75-amino-acid chain: Veswaprin-b (75 aa).

The signal sequence occupies residues 1-24; the sequence is MSSGGLLLLLGLLTLWAELTPISG. The interval 23 to 42 is disordered; that stretch reads SGQDRPKKPGLRPPRPQKPP. The WAP; atypical domain occupies 27-72; the sequence is RPKKPGLRPPRPQKPPCVRECKNDWRCPGEQKCCRYGCIYECRDPI. Cystine bridges form between Cys43–Cys64, Cys47–Cys59, and Cys53–Cys68.

It belongs to the venom waprin family. In terms of tissue distribution, expressed by the venom gland.

It localises to the secreted. Damages membranes of susceptible bacteria. Has no hemolytic activity. Not toxic to mice. Does not inhibit the proteinases elastase and cathepsin G. The chain is Veswaprin-b from Demansia vestigiata (Lesser black whip snake).